Here is a 982-residue protein sequence, read N- to C-terminus: Little elongation complex subunit 2 (982 aa).

Phosphoserine is present on residues Ser-17 and Ser-326. Residues 410 to 427 are compositionally biased toward polar residues; that stretch reads TTKVSKSPSPASTSTVPN. Disordered stretches follow at residues 410–450 and 473–504; these read TTKV…PDIS and GMDG…PLIQ. The span at 479–497 shows a compositional bias: basic and acidic residues; sequence EECKNKDDQGFESCEKVSN. Position 571 is a phosphoserine (Ser-571). Thr-573 is modified (phosphothreonine). Disordered regions lie at residues 595 to 623, 672 to 697, and 930 to 982; these read VGSN…NTAC, ENSK…KSGW, and PKSL…RKIT. Low complexity predominate over residues 597 to 610; it reads SNLSSRPASPNSSS. 2 stretches are compositionally biased toward polar residues: residues 611–623 and 672–683; these read GQAS…NTAC and ENSKQPSVSEQL. Residues 684 to 697 show a composition bias toward low complexity; that stretch reads SGPSDSSSWPKSGW. The span at 956–970 shows a compositional bias: polar residues; it reads SMETKSSCLPAQQVE.

This sequence belongs to the ICE2 family. Component of the little elongation complex (LEC), at least composed of ELL (ELL, ELL2 or ELL3), ZC3H8, ICE1 and ICE2. Interacts with ICE1 (via C-terminus domain). Interacts with ELL. Expressed at low levels in lung and testis.

It localises to the nucleus. In terms of biological role, component of the little elongation complex (LEC), a complex required to regulate small nuclear RNA (snRNA) gene transcription by RNA polymerase II and III. This Homo sapiens (Human) protein is Little elongation complex subunit 2 (ICE2).